Here is a 60-residue protein sequence, read N- to C-terminus: Homeobox protein EgHBX4 (60 aa).

Positions 1–60 form a DNA-binding region, homeobox; the sequence is SRRERTIYTPEQLEAMEEVFGVNRYPDVSMREELASRLGINESKIQVWFKNRRAKLRNLE.

Belongs to the paired homeobox family. Bicoid subfamily.

It localises to the nucleus. The polypeptide is Homeobox protein EgHBX4 (HBX4) (Echinococcus granulosus (Hydatid tapeworm)).